The chain runs to 409 residues: S-adenosylmethionine synthase (409 aa).

Glycine 141–aspartate 146 serves as a coordination point for ATP.

This sequence belongs to the AdoMet synthase 2 family. It depends on Mg(2+) as a cofactor.

It catalyses the reaction L-methionine + ATP + H2O = S-adenosyl-L-methionine + phosphate + diphosphate. It participates in amino-acid biosynthesis; S-adenosyl-L-methionine biosynthesis; S-adenosyl-L-methionine from L-methionine: step 1/1. Functionally, catalyzes the formation of S-adenosylmethionine from methionine and ATP. The polypeptide is S-adenosylmethionine synthase (Hyperthermus butylicus (strain DSM 5456 / JCM 9403 / PLM1-5)).